The following is a 113-amino-acid chain: Endoribonuclease SymE (113 aa).

Residues 29 to 74 (SRYPDYSRIPAITLKGQWLEAAGFATGTAVDVKVMEGCIVLTAQPP) form the SpoVT-AbrB domain.

The protein belongs to the SymE family.

The protein resides in the cytoplasm. Its function is as follows. Involved in the degradation and recycling of damaged RNA. It is itself a target for degradation by the ATP-dependent protease Lon. The protein is Endoribonuclease SymE of Escherichia coli (strain K12 / MC4100 / BW2952).